Here is a 323-residue protein sequence, read N- to C-terminus: Aquaporin-4 (323 aa).

Residues 1 to 36 (MSDRPTARRWGKCGPLCTRENIMVAFKGVWTQAFWK) lie on the Cytoplasmic side of the membrane. Residues Cys-13 and Cys-17 are each lipidated (S-palmitoyl cysteine). Residues 37–57 (AVTAEFLAMLIFVLLSLGSTI) form a helical membrane-spanning segment. The Extracellular portion of the chain corresponds to 58 to 69 (NWGGTEKPLPVD). A helical membrane pass occupies residues 70–89 (MVLISLCFGLSIATMVQCFG). At 90–93 (HISG) the chain is on the cytoplasmic side. Residues 94-101 (GHINPAVT) constitute an intramembrane region (discontinuously helical). The NPA 1 motif lies at 97-99 (NPA). The Cytoplasmic segment spans residues 102–115 (VAMVCTRKISIAKS). At Ser-111 the chain carries Phosphoserine; by PKG. Residues 116–136 (VFYIAAQCLGAIIGAGILYLV) traverse the membrane as a helical segment. Topologically, residues 137-155 (TPPSVVGGLGVTMVHGNLT) are extracellular. An N-linked (GlcNAc...) asparagine glycan is attached at Asn-153. Residues 156–176 (AGHGLLVELIITFQLVFTIFA) form a helical membrane-spanning segment. At 177–184 (SCDSKRTD) the chain is on the cytoplasmic side. Phosphoserine; by PKC is present on Ser-180. The helical transmembrane segment at 185-205 (VTGSIALAIGFSVAIGHLFAI) threads the bilayer. N-linked (GlcNAc...) asparagine glycosylation is present at Asn-206. The Extracellular portion of the chain corresponds to 206 to 208 (NYT). The segment at residues 209 to 222 (GASMNPARSFGPAV) is an intramembrane region (discontinuously helical). The short motif at 213–215 (NPA) is the NPA 2 element. At 223–231 (IMGNWENHW) the chain is on the extracellular side. The helical transmembrane segment at 232–252 (IYWVGPIIGAVLAGGLYEYVF) threads the bilayer. The Cytoplasmic segment spans residues 253–323 (CPDVEFKRRF…DQSGEVLSSV (71 aa)). Phosphoserine is present on residues Ser-276 and Ser-285. Thr-289 is modified (phosphothreonine). Phosphoserine is present on Ser-321.

The protein belongs to the MIP/aquaporin (TC 1.A.8) family. Homotetramer. The tetramers can form oligomeric arrays in membranes. The size of the oligomers differs between tissues and is smaller in skeletal muscle than in brain. Interaction between AQP4 oligomeric arrays in close-by cells can contribute to cell-cell adhesion. Part of a complex containing MLC1, TRPV4, HEPACAM and ATP1B1. Phosphorylation by PKC at Ser-180 reduces conductance by 50%. Phosphorylation by PKG at Ser-111 in response to glutamate increases conductance by 40%. Post-translationally, isoform 2: Palmitoylated on its N-terminal region. Isoform 1: Not palmitoylated. As to expression, detected in skeletal muscle. Detected in stomach, along the glandular base region of the fundic gland (at protein level). Detected in brain, lung and skeletal muscle, and at much lower levels in heart and ovary.

The protein localises to the cell membrane. It localises to the basolateral cell membrane. Its subcellular location is the endosome membrane. It is found in the sarcolemma. The protein resides in the cell projection. The enzyme catalyses H2O(in) = H2O(out). Forms a water-specific channel. Plays an important role in brain water homeostasis. It is involved in glymphatic solute transport and is required for a normal rate of water exchange across the blood brain interface. Required for normal levels of cerebrospinal fluid influx into the brain cortex and parenchyma along paravascular spaces that surround penetrating arteries, and for normal drainage of interstitial fluid along paravenous drainage pathways. Thereby, it is required for normal clearance of solutes from the brain interstitial fluid, including soluble beta-amyloid peptides derived from APP. Plays a redundant role in urinary water homeostasis and urinary concentrating ability. This chain is Aquaporin-4 (AQP4), found in Homo sapiens (Human).